The chain runs to 60 residues: UPF0434 protein ETA_21370 (60 aa).

It belongs to the UPF0434 family.

The polypeptide is UPF0434 protein ETA_21370 (Erwinia tasmaniensis (strain DSM 17950 / CFBP 7177 / CIP 109463 / NCPPB 4357 / Et1/99)).